Reading from the N-terminus, the 98-residue chain is PqqA binding protein (98 aa).

It belongs to the PqqD family. Monomer. Interacts with PqqE.

The protein operates within cofactor biosynthesis; pyrroloquinoline quinone biosynthesis. Functions as a PqqA binding protein and presents PqqA to PqqE, in the pyrroloquinoline quinone (PQQ) biosynthetic pathway. The chain is PqqA binding protein from Rhizobium meliloti (strain 1021) (Ensifer meliloti).